Consider the following 234-residue polypeptide: Large ribosomal subunit protein uL1 (234 aa).

This sequence belongs to the universal ribosomal protein uL1 family. As to quaternary structure, part of the 50S ribosomal subunit.

Its function is as follows. Binds directly to 23S rRNA. The L1 stalk is quite mobile in the ribosome, and is involved in E site tRNA release. Functionally, protein L1 is also a translational repressor protein, it controls the translation of the L11 operon by binding to its mRNA. This Aliivibrio salmonicida (strain LFI1238) (Vibrio salmonicida (strain LFI1238)) protein is Large ribosomal subunit protein uL1.